Reading from the N-terminus, the 487-residue chain is Proline--tRNA ligase (487 aa).

It belongs to the class-II aminoacyl-tRNA synthetase family. ProS type 3 subfamily. In terms of assembly, homodimer.

It is found in the cytoplasm. It carries out the reaction tRNA(Pro) + L-proline + ATP = L-prolyl-tRNA(Pro) + AMP + diphosphate. In terms of biological role, catalyzes the attachment of proline to tRNA(Pro) in a two-step reaction: proline is first activated by ATP to form Pro-AMP and then transferred to the acceptor end of tRNA(Pro). The chain is Proline--tRNA ligase from Pyrobaculum calidifontis (strain DSM 21063 / JCM 11548 / VA1).